Here is a 216-residue protein sequence, read N- to C-terminus: Thymidylate kinase (216 aa).

Residue 9-16 (GIEGSGKT) participates in ATP binding.

This sequence belongs to the thymidylate kinase family.

It carries out the reaction dTMP + ATP = dTDP + ADP. Functionally, phosphorylation of dTMP to form dTDP in both de novo and salvage pathways of dTTP synthesis. The protein is Thymidylate kinase of Syntrophotalea carbinolica (strain DSM 2380 / NBRC 103641 / GraBd1) (Pelobacter carbinolicus).